The sequence spans 118 residues: NADH-quinone oxidoreductase subunit A (118 aa).

Transmembrane regions (helical) follow at residues 8–28 (ILIF…LNYL), 61–81 (FMYA…YPWA), and 86–106 (VLGL…VLGL).

This sequence belongs to the complex I subunit 3 family. NDH-1 is composed of 14 different subunits. Subunits NuoA, H, J, K, L, M, N constitute the membrane sector of the complex.

The protein resides in the cell membrane. It carries out the reaction a quinone + NADH + 5 H(+)(in) = a quinol + NAD(+) + 4 H(+)(out). Its function is as follows. NDH-1 shuttles electrons from NADH, via FMN and iron-sulfur (Fe-S) centers, to quinones in the respiratory chain. The immediate electron acceptor for the enzyme in this species is believed to be a menaquinone. Couples the redox reaction to proton translocation (for every two electrons transferred, four hydrogen ions are translocated across the cytoplasmic membrane), and thus conserves the redox energy in a proton gradient. The chain is NADH-quinone oxidoreductase subunit A from Carboxydothermus hydrogenoformans (strain ATCC BAA-161 / DSM 6008 / Z-2901).